Reading from the N-terminus, the 206-residue chain is Ras-related protein Rab-7a (206 aa).

GTP is bound at residue 15–22 (GDSGVGKT). Phosphoserine is present on residues serine 17 and serine 23. Threonine 34, threonine 40, and threonine 64 each carry phosphothreonine. Residues 34–40 (TQQYRAT) and 63–67 (DTAGQ) each bind GTP. The Effector region motif lies at 37 to 45 (YRATVGADF). Serine 72 carries the phosphoserine modification. Phosphotyrosine is present on residues tyrosine 78 and tyrosine 88. Residues 125–128 (NKLD) and 157–158 (AK) each bind GTP. S-geranylgeranyl cysteine attachment occurs at residues cysteine 205 and cysteine 206.

The protein belongs to the small GTPase superfamily. Rab family.

The protein localises to the cytoplasmic vesicle. It localises to the phagosome membrane. It is found in the late endosome membrane. The protein resides in the lysosome membrane. Its subcellular location is the autophagosome membrane. The protein localises to the lipid droplet. The enzyme catalyses GTP + H2O = GDP + phosphate + H(+). Small GTPase which cycles between active GTP-bound and inactive GDP-bound states. In its active state, binds to a variety of effector proteins playing a key role in the regulation of endo-lysosomal trafficking. Governs early-to-late endosomal maturation, microtubule minus-end as well as plus-end directed endosomal migration and positioning, and endosome-lysosome transport through different protein-protein interaction cascades. Involved in lipophagy, a cytosolic lipase-independent autophagic pathway. Plays a role in phagocyte formation and acidification. The chain is Ras-related protein Rab-7a from Paramecium octaurelia.